Here is a 554-residue protein sequence, read N- to C-terminus: Potassium-transporting ATPase potassium-binding subunit (554 aa).

The next 10 helical transmembrane spans lie at M1 to A21, P60 to L80, G131 to V151, V174 to I194, P246 to T266, G279 to W299, G375 to G395, F412 to M432, I481 to G501, and G525 to L545.

It belongs to the KdpA family. The system is composed of three essential subunits: KdpA, KdpB and KdpC.

The protein resides in the cell membrane. Part of the high-affinity ATP-driven potassium transport (or Kdp) system, which catalyzes the hydrolysis of ATP coupled with the electrogenic transport of potassium into the cytoplasm. This subunit binds the extracellular potassium ions and delivers the ions to the membrane domain of KdpB through an intramembrane tunnel. This chain is Potassium-transporting ATPase potassium-binding subunit, found in Streptomyces avermitilis (strain ATCC 31267 / DSM 46492 / JCM 5070 / NBRC 14893 / NCIMB 12804 / NRRL 8165 / MA-4680).